A 501-amino-acid polypeptide reads, in one-letter code: Phosphoethanolamine N-methyltransferase 1 (501 aa).

S-adenosyl-L-homocysteine is bound by residues glycine 72, arginine 77, aspartate 93, aspartate 118, valine 119, and asparagine 137. Phosphocholine is bound by residues serine 170, threonine 175, glycine 176, arginine 180, and tyrosine 187. Residues 256–257 (QY) and tyrosine 265 contribute to the N-methylethanolamine phosphate site. Tyrosine 265 lines the phosphocholine pocket. S-adenosyl-L-homocysteine-binding residues include valine 274, serine 275, glycine 301, aspartate 323, aspartate 349, cysteine 350, and arginine 366. Residues tyrosine 397, tyrosine 411, arginine 415, tyrosine 417, and lysine 483 each coordinate phosphocholine. Residues tyrosine 397, tyrosine 411, 415–417 (RGY), and lysine 483 each bind N-methylethanolamine phosphate.

This sequence belongs to the class I-like SAM-binding methyltransferase superfamily. PEAMT family.

The catalysed reaction is phosphoethanolamine + S-adenosyl-L-methionine = N-methylethanolamine phosphate + S-adenosyl-L-homocysteine + H(+). It carries out the reaction N-methylethanolamine phosphate + S-adenosyl-L-methionine = N,N-dimethylethanolamine phosphate + S-adenosyl-L-homocysteine + H(+). It catalyses the reaction N,N-dimethylethanolamine phosphate + S-adenosyl-L-methionine = phosphocholine + S-adenosyl-L-homocysteine + H(+). It participates in phospholipid metabolism; phosphatidylcholine biosynthesis; phosphocholine from phosphoethanolamine: step 1/1. Functionally, involved in phosphocholine biosynthesis. Catalyzes the N-methylation of phosphoethanolamine, phosphomonomethylethanolamine and phosphodimethylethanolamine, the three methylation steps required to convert phosphoethanolamine to phosphocholine (PC). May be involved in root development. The polypeptide is Phosphoethanolamine N-methyltransferase 1 (Zea mays (Maize)).